The primary structure comprises 115 residues: Large ribosomal subunit protein bL19 (115 aa).

Belongs to the bacterial ribosomal protein bL19 family.

Its function is as follows. This protein is located at the 30S-50S ribosomal subunit interface and may play a role in the structure and function of the aminoacyl-tRNA binding site. The sequence is that of Large ribosomal subunit protein bL19 from Desulforamulus reducens (strain ATCC BAA-1160 / DSM 100696 / MI-1) (Desulfotomaculum reducens).